The following is a 1339-amino-acid chain: Tuberous sclerosis 2 protein homolog (1339 aa).

Residue serine 1036 is modified to Phosphoserine. A Rap-GAP domain is found at 1109-1303 (ILANTNPSED…AERLRQLKRL (195 aa)).

In terms of assembly, interacts with tsc1.

It is found in the cytoplasm. Its subcellular location is the nucleus. Its function is as follows. Together with tsc1, required for uptake of various amino acids from the environment and for proper conjugation. Involved in induction of gene expression of permeases and genes required for meiosis upon nitrogen starvation. May act as a GTPase-activating protein (GAP) for the small GTPase rhb1. The protein is Tuberous sclerosis 2 protein homolog (tsc2) of Schizosaccharomyces pombe (strain 972 / ATCC 24843) (Fission yeast).